Consider the following 401-residue polypeptide: Methyltransferase cfoC (401 aa).

An S-adenosyl-L-methionine-binding site is contributed by Asp-268. His-308 (proton acceptor) is an active-site residue.

This sequence belongs to the class I-like SAM-binding methyltransferase superfamily. Cation-independent O-methyltransferase family.

Its pathway is secondary metabolite biosynthesis; flavonoid biosynthesis. Methyltransferase; part of the gene cluster that mediates the biosynthesis of chlorflavonin, a fungal flavonoid with acetolactate synthase inhibitory activity. Within the pathway, cfoC is responsible for the methylation at position C8-OH of flavonoid. The pathway begins with the PKS-NRPS hybrid synthetase cfoA that uses benzoic acid or p-hydroxybenzoic acid as a starter unit with four rounds of chain elongation using malonyl-CoA to form the chalcone skeleton. Then, a new type of chalcone isomerase, cfoK, catalyzes the conversion of the chalcone into a flavanone by a histidine-mediated oxa-Michael addition mechanism. The desaturation of flavanone to flavone is catalyzed by a new type of flavone synthase, the flavin mononucleotide (FMN)-dependent oxidoreductase cfoJ. Monooxygenases cfoF, cfoG, and P450 cfoH are responsible for the hydroxylation of the flavonoid skeleton at sites C3, C8, and C2', respectively. Like cfoF, the dehydratase cfoI also plays a role in the hydroxylation of position C3. Methyltransferases cfoB, cfoC, and cfoD then catalyze the methylation of C7-OH, C8-OH, and C3-OH, respectively. Finally, the monooxygenase cfoE is responsible for the chlorination of flavonoid at position C3'. In Aspergillus candidus, this protein is Methyltransferase cfoC.